Consider the following 307-residue polypeptide: Acetaldehyde dehydrogenase (307 aa).

12 to 15 (SGNI) provides a ligand contact to NAD(+). Cys-127 (acyl-thioester intermediate) is an active-site residue. Residues 158–166 (SAGPGTRQN) and Asn-278 each bind NAD(+).

This sequence belongs to the acetaldehyde dehydrogenase family. In terms of assembly, monomer. Can also form a heterotetramer composed of two aldolase (TTHB246) and two dehydrogenase (TTHB247) subunits. Upon complex formation, the aldolase shows a 5-fold increase in substrate affinity, while the dehydrogenase shows a 3-fold decrease; the kcat values of each enzyme are reduced by 2-fold when they are in a complex.

It catalyses the reaction acetaldehyde + NAD(+) + CoA = acetyl-CoA + NADH + H(+). The catalysed reaction is propanal + NAD(+) + CoA = propanoyl-CoA + NADH + H(+). Catalyzes the conversion of acetaldehyde or propanal to acetyl-CoA or propanoyl-CoA, respectively, using NAD(+) and coenzyme A. The aldehyde substrates can be directly channeled from the aldolase TTHB246 to the dehydrogenase TTHB247. Is the final enzyme in the meta-cleavage pathway for the degradation of aromatic compounds. This is Acetaldehyde dehydrogenase from Thermus thermophilus (strain ATCC 27634 / DSM 579 / HB8).